We begin with the raw amino-acid sequence, 179 residues long: Chymotrypsin inhibitor ECI (179 aa).

Pyrrolidone carboxylic acid is present on Gln1. 2 cysteine pairs are disulfide-bonded: Cys40-Cys84 and Cys134-Cys143.

Belongs to the protease inhibitor I3 (leguminous Kunitz-type inhibitor) family.

Inhibition of chymotrypsin. This chain is Chymotrypsin inhibitor ECI, found in Erythrina variegata (Indian coral tree).